The sequence spans 452 residues: Pup--protein ligase 1 (452 aa).

Glu-9 contributes to the Mg(2+) binding site. Arg-53 serves as a coordination point for ATP. Tyr-55 contacts Mg(2+). The active-site Proton acceptor is Asp-57. Glu-63 serves as a coordination point for Mg(2+). ATP is bound by residues Thr-66 and Trp-419.

The protein belongs to the Pup ligase/Pup deamidase family. Pup-conjugating enzyme subfamily.

It catalyses the reaction ATP + [prokaryotic ubiquitin-like protein]-L-glutamate + [protein]-L-lysine = ADP + phosphate + N(6)-([prokaryotic ubiquitin-like protein]-gamma-L-glutamyl)-[protein]-L-lysine.. It participates in protein degradation; proteasomal Pup-dependent pathway. Its pathway is protein modification; protein pupylation. Its function is as follows. Catalyzes the covalent attachment of the prokaryotic ubiquitin-like protein modifier Pup to the proteasomal substrate proteins, thereby targeting them for proteasomal degradation. This tagging system is termed pupylation. The ligation reaction involves the side-chain carboxylate of the C-terminal glutamate of Pup and the side-chain amino group of a substrate lysine. This is Pup--protein ligase 1 from Rhodococcus erythropolis (Arthrobacter picolinophilus).